The primary structure comprises 335 residues: Ornithine carbamoyltransferase, catabolic (335 aa).

Carbamoyl phosphate-binding positions include 59–62, Gln86, Arg110, and 137–140; these read STRT and HPTQ. L-ornithine-binding positions include Asn169, Asp233, and 237–238; that span reads SM. Residues 274 to 275 and Arg319 contribute to the carbamoyl phosphate site; that span reads CL.

The protein belongs to the aspartate/ornithine carbamoyltransferase superfamily. OTCase family.

It is found in the cytoplasm. The enzyme catalyses carbamoyl phosphate + L-ornithine = L-citrulline + phosphate + H(+). Its pathway is amino-acid degradation; L-arginine degradation via ADI pathway; carbamoyl phosphate from L-arginine: step 2/2. Its function is as follows. Reversibly catalyzes the transfer of the carbamoyl group from carbamoyl phosphate (CP) to the N(epsilon) atom of ornithine (ORN) to produce L-citrulline. This Bacillus licheniformis (strain ATCC 14580 / DSM 13 / JCM 2505 / CCUG 7422 / NBRC 12200 / NCIMB 9375 / NCTC 10341 / NRRL NRS-1264 / Gibson 46) protein is Ornithine carbamoyltransferase, catabolic (arcB).